Consider the following 335-residue polypeptide: Rho guanine nucleotide exchange factor 39 (335 aa).

Positions 22-197 constitute a DH domain; it reads KRACTARELL…SETAQRVHTI (176 aa). The PH domain maps to 227–331; the sequence is WFLRQGWLLV…WYHSLTLAIS (105 aa).

It localises to the cell membrane. In terms of biological role, promotes cell proliferation. The sequence is that of Rho guanine nucleotide exchange factor 39 (ARHGEF39) from Bos taurus (Bovine).